The chain runs to 31 residues: Circulin-B (31 aa).

A cross-link (cyclopeptide (Gly-Asn)) is located at residues G1–N31. Disulfide bonds link C5-C21, C9-C23, and C14-C28.

This is a cyclic peptide.

Probably participates in a plant defense mechanism. Has antibiotic activity. Inhibits the cytopathic effects and replication of the human immunodeficiency virus. Active against both Gram-positive and Gram-negative bacteria. This Chassalia parviflora protein is Circulin-B.